Reading from the N-terminus, the 242-residue chain is Probable transcriptional regulatory protein MHP7448_0474 (242 aa).

It belongs to the TACO1 family.

The protein localises to the cytoplasm. The sequence is that of Probable transcriptional regulatory protein MHP7448_0474 from Mesomycoplasma hyopneumoniae (strain 7448) (Mycoplasma hyopneumoniae).